The sequence spans 218 residues: CTP-dependent diacylglycerol kinase 1 (218 aa).

The Lumenal segment spans residues 1–19 (MSTKLTWSQWSKKHEIPRK). The helical transmembrane segment at 20–37 (ALHTSIGFFALLLQGCGY) threads the bilayer. A topological domain (cytoplasmic) is located at residue H38. A helical membrane pass occupies residues 39–59 (AAQIIPVIEIGFIPAFTGDVI). Residues 60-88 (RFNWPAFSRLYNRVIGPLMRESEKNAWNG) lie on the Lumenal side of the membrane. Residues 89–109 (VIFYMIGVWIVLKVFPEEIAV) form a helical membrane-spanning segment. Over 110–142 (MSVLLLSWCDTTASTVGRKWGKYTPKIAKNKSL) the chain is Cytoplasmic. Residues 143 to 163 (AGSLGAFVCGVFCCYVYWGLF) form a helical membrane-spanning segment. The Lumenal segment spans residues 164–179 (RTGPDSLAAQSRIPFP). Helical transmembrane passes span 180–200 (WLCL…VWGL) and 201–217 (DDNL…LYLI). M218 is a topological domain (lumenal).

It belongs to the DGK1 family. Ca(2+) is required as a cofactor. The cofactor is Mg(2+).

It is found in the endoplasmic reticulum membrane. The protein localises to the nucleus membrane. The enzyme catalyses a 1,2-diacyl-sn-glycerol + CTP = a 1,2-diacyl-sn-glycero-3-phosphate + CDP + H(+). Its function is as follows. CTP-dependent diacylglycerol kinase that catalyzes the phosphorylation of diacylglycerol (DAG) to phosphatidate (PA). Controls phosphatidate levels at the nuclear envelope. Counteracts the activity of PA phosphatase ned1. May be involved in vesicle trafficking between the endoplasmic reticulum and the Golgi apparatus. Involved in pre-tRNA splicing. The sequence is that of CTP-dependent diacylglycerol kinase 1 (ptp4) from Schizosaccharomyces pombe (strain 972 / ATCC 24843) (Fission yeast).